The chain runs to 88 residues: MAASVPPGGQRILQKRRQAQSIKEKQAKQTPTSTRQAGYGGSSSSILKLYTDEANGFRVDSLVVLFLSVGFIFSVIALHLLTKFTHII.

The disordered stretch occupies residues 1-42 (MAASVPPGGQRILQKRRQAQSIKEKQAKQTPTSTRQAGYGGS). At 1–61 (MAASVPPGGQ…DEANGFRVDS (61 aa)) the chain is on the cytoplasmic side. A compositionally biased stretch (polar residues) spans 28 to 42 (KQTPTSTRQAGYGGS). The helical transmembrane segment at 62 to 82 (LVVLFLSVGFIFSVIALHLLT) threads the bilayer.

Belongs to the SEC61-beta family. As to quaternary structure, component of the heterotrimeric Ssh1 complex, which is composed of SSH1, SBH2 and SSS1.

The protein resides in the endoplasmic reticulum membrane. Functionally, part of the Ssh1 complex, which probably is the major component of a channel-forming translocon complex that may function exclusively in the cotranslational pathway of protein endoplasmic reticulum (ER) import. This Saccharomyces cerevisiae (strain ATCC 204508 / S288c) (Baker's yeast) protein is Protein transport protein SBH2 (SBH2).